Reading from the N-terminus, the 217-residue chain is Probable GTP-binding protein EngB (217 aa).

Residues 24 to 207 form the EngB-type G domain; sequence SQPEICFAGR…HELIESWLIP (184 aa). Residues 32-39, 59-63, 81-84, 148-151, and 185-188 each bind GTP; these read GRSNAGKS, GRTQH, DLPG, TKCD, and LFSA. 2 residues coordinate Mg(2+): Ser-39 and Thr-61.

It belongs to the TRAFAC class TrmE-Era-EngA-EngB-Septin-like GTPase superfamily. EngB GTPase family. It depends on Mg(2+) as a cofactor.

Its function is as follows. Necessary for normal cell division and for the maintenance of normal septation. This Paraburkholderia phytofirmans (strain DSM 17436 / LMG 22146 / PsJN) (Burkholderia phytofirmans) protein is Probable GTP-binding protein EngB.